A 702-amino-acid polypeptide reads, in one-letter code: MKTLFLAPTRNGVGLSSTALGLARALERQSLKVAFLKPIAQTYEPRTDDSVHFARAVAHLTTPDPIPLTRAEELLSQGGEEDLMEQVIALAREAAGEGSDVLIAEGLALNERNVYAGTLNARLARNLEADTVLVSSLAGVTPAELADELEIAAQGYRRSDGSGLAGFVLNFAPRELDFGSLMAELRSRSRVLASGELPLLGVVSLDPALRQLRTLDVARALDAEIINAGEAESRRVSSTVVTARSVPQMTNLFTSGALIVTPADREDVIMAAALSHLSGTPLAGLMYTSGSAPEATIQQLCEVALTSSLPVLRVPTNSFETASRLVHLDFRVPHDDPRRMDRMLDYIADRLDTVPLGARLRAPGVAGERRLPPSAFRYELIQRARAANKRIVLPEGDEPRTVKAAIRCTEKGIARCVLLAPPEKVRQVAQGQGLELPEGLEIIDPETVRGKYVAPMVELRKSKGLTEPQAEAQLEDSVVLGTMMLALGEVDGLVSGAVHTTASTVRPALQLIKTAPGSSLVSSVFFMLMPEQVLVYGDAAINPDPNAQELADIAIQSADSAHAFGIPVRVAMLSYSTGESGSGEDVEKVKEATKLVRERRPELLVDGPLQYDAASVPSVGRSKAPDSPVAGRATVFIFPDLNTGNTTYKAVQRSAGVVAVGPMLQGLRKPVNDLSRGALVDDIVYTIALTAIQATQSAADCG.

The tract at residues 375 to 702 is phosphate acetyltransferase; the sequence is AFRYELIQRA…QATQSAADCG (328 aa).

It in the N-terminal section; belongs to the CobB/CobQ family. This sequence in the C-terminal section; belongs to the phosphate acetyltransferase and butyryltransferase family. In terms of assembly, homohexamer.

It is found in the cytoplasm. The enzyme catalyses acetyl-CoA + phosphate = acetyl phosphate + CoA. It participates in metabolic intermediate biosynthesis; acetyl-CoA biosynthesis; acetyl-CoA from acetate: step 2/2. Functionally, involved in acetate metabolism. This is Phosphate acetyltransferase (pta) from Deinococcus radiodurans (strain ATCC 13939 / DSM 20539 / JCM 16871 / CCUG 27074 / LMG 4051 / NBRC 15346 / NCIMB 9279 / VKM B-1422 / R1).